A 209-amino-acid polypeptide reads, in one-letter code: Max dimerization protein 4 (209 aa).

Residues 6–23 (LLILLEAAEYLERRDREA) are interaction with SIN3A and SIN3B. The bHLH domain maps to 53 to 105 (NNRSSHNELEKHRRAKLRLYLEQLKQLVPLGPDSTRHTTLSLLKRAKVHIKKL). Positions 140–209 (RVRTDSTGSA…CRRLGRPALS (70 aa)) are disordered. Residues 153–163 (DDSEQEVDIEG) are compositionally biased toward acidic residues. A compositionally biased stretch (basic residues) spans 199–209 (HCRRLGRPALS).

Efficient DNA binding requires dimerization with another bHLH protein. Binds DNA as a heterodimer with MAX. Interacts with SIN3A AND SIN3B. Interacts with RNF17.

It is found in the nucleus. Functionally, transcriptional repressor. Binds with MAX to form a sequence-specific DNA-binding protein complex which recognizes the core sequence 5'-CAC[GA]TG-3'. Antagonizes MYC transcriptional activity by competing for MAX and suppresses MYC dependent cell transformation. The protein is Max dimerization protein 4 (MXD4) of Homo sapiens (Human).